The primary structure comprises 948 residues: Coatomer subunit beta-1 (948 aa).

HEAT repeat units lie at residues 49–87, 92–126, 127–164, 274–311, 312–349, and 391–428; these read ETIP…TDSK, PEMI…MKET, EIVE…LPQG, TAIR…TLHR, DIMV…HHNI, and EVAS…TNPK.

Oligomeric complex that consists of at least the alpha, beta, beta', gamma, delta, epsilon and zeta subunits.

The protein resides in the cytoplasm. Its subcellular location is the golgi apparatus membrane. It localises to the cytoplasmic vesicle. The protein localises to the COPI-coated vesicle membrane. Its function is as follows. The coatomer is a cytosolic protein complex that binds to dilysine motifs and reversibly associates with Golgi non-clathrin-coated vesicles, which further mediate biosynthetic protein transport from the ER, via the Golgi up to the trans Golgi network. Coatomer complex is required for budding from Golgi membranes, and is essential for the retrograde Golgi-to-ER transport of dilysine-tagged proteins. The chain is Coatomer subunit beta-1 from Arabidopsis thaliana (Mouse-ear cress).